The sequence spans 359 residues: DNA polymerase IV (359 aa).

Residues 4 to 185 (IIHIDMDCYF…LSLRKIPGVG (182 aa)) enclose the UmuC domain. Residues aspartate 8 and aspartate 103 each coordinate Mg(2+). The active site involves glutamate 104.

This sequence belongs to the DNA polymerase type-Y family. In terms of assembly, monomer. Mg(2+) serves as cofactor.

Its subcellular location is the cytoplasm. The enzyme catalyses DNA(n) + a 2'-deoxyribonucleoside 5'-triphosphate = DNA(n+1) + diphosphate. Poorly processive, error-prone DNA polymerase involved in untargeted mutagenesis. Copies undamaged DNA at stalled replication forks, which arise in vivo from mismatched or misaligned primer ends. These misaligned primers can be extended by PolIV. Exhibits no 3'-5' exonuclease (proofreading) activity. May be involved in translesional synthesis, in conjunction with the beta clamp from PolIII. In Shewanella sp. (strain ANA-3), this protein is DNA polymerase IV.